The chain runs to 341 residues: S-adenosylmethionine:tRNA ribosyltransferase-isomerase (341 aa).

The protein belongs to the QueA family. Monomer.

Its subcellular location is the cytoplasm. The enzyme catalyses 7-aminomethyl-7-carbaguanosine(34) in tRNA + S-adenosyl-L-methionine = epoxyqueuosine(34) in tRNA + adenine + L-methionine + 2 H(+). It functions in the pathway tRNA modification; tRNA-queuosine biosynthesis. Its function is as follows. Transfers and isomerizes the ribose moiety from AdoMet to the 7-aminomethyl group of 7-deazaguanine (preQ1-tRNA) to give epoxyqueuosine (oQ-tRNA). This is S-adenosylmethionine:tRNA ribosyltransferase-isomerase from Desulforamulus reducens (strain ATCC BAA-1160 / DSM 100696 / MI-1) (Desulfotomaculum reducens).